The following is a 300-amino-acid chain: NAD kinase (300 aa).

Aspartate 75 acts as the Proton acceptor in catalysis. NAD(+)-binding positions include 75-76 (DG), 149-150 (ND), arginine 177, aspartate 179, 190-195 (TAYALS), alanine 214, and glutamine 248.

This sequence belongs to the NAD kinase family. A divalent metal cation is required as a cofactor.

It is found in the cytoplasm. The enzyme catalyses NAD(+) + ATP = ADP + NADP(+) + H(+). In terms of biological role, involved in the regulation of the intracellular balance of NAD and NADP, and is a key enzyme in the biosynthesis of NADP. Catalyzes specifically the phosphorylation on 2'-hydroxyl of the adenosine moiety of NAD to yield NADP. This chain is NAD kinase, found in Paraburkholderia phytofirmans (strain DSM 17436 / LMG 22146 / PsJN) (Burkholderia phytofirmans).